The sequence spans 327 residues: GMP reductase (327 aa).

Cys175 serves as the catalytic Thioimidate intermediate. 204-227 (IIADGGIRTHGDVAKSIRFGATMV) provides a ligand contact to NADP(+).

It belongs to the IMPDH/GMPR family. GuaC type 2 subfamily.

It catalyses the reaction IMP + NH4(+) + NADP(+) = GMP + NADPH + 2 H(+). Catalyzes the irreversible NADPH-dependent deamination of GMP to IMP. It functions in the conversion of nucleobase, nucleoside and nucleotide derivatives of G to A nucleotides, and in maintaining the intracellular balance of A and G nucleotides. The polypeptide is GMP reductase (Bacillus thuringiensis subsp. konkukian (strain 97-27)).